We begin with the raw amino-acid sequence, 97 residues long: Large ribosomal subunit protein bL27 (97 aa).

Positions 1–21 (MAHKKGVGSSRNGRDSNPKYR) are disordered.

Belongs to the bacterial ribosomal protein bL27 family.

The chain is Large ribosomal subunit protein bL27 from Gemmatimonas aurantiaca (strain DSM 14586 / JCM 11422 / NBRC 100505 / T-27).